Reading from the N-terminus, the 497-residue chain is Reticulophagy regulator 1 (497 aa).

The interval 1–51 (MASPAPPEHAEEGCPAPAAEEQAPPSPPPPQASPAERQQQEEEAQEAGAAE) is disordered. The Cytoplasmic portion of the chain corresponds to 1–59 (MASPAPPEHAEEGCPAPAAEEQAPPSPPPPQASPAERQQQEEEAQEAGAAEGAGLQVEE). A compositionally biased stretch (low complexity) spans 13-23 (GCPAPAAEEQA). Residues 60–80 (AAGRAAAAVTWLLGEPVLWLG) traverse the membrane as a helical segment. The Lumenal portion of the chain corresponds to 81–95 (CRADELLSWKRPLRS). The reticulon homology domain stretch occupies residues 84–233 (DELLSWKRPL…LLCAFLCPLF (150 aa)). Residues 96–116 (LLGFVAANLLFWFLALTPWRV) traverse the membrane as a helical segment. At 117-118 (YH) the chain is on the cytoplasmic side. The chain crosses the membrane as a helical span at residues 119-139 (LISVMILGRVIMQIIKDMVLS). Over 140 to 208 (RTRGAQLWRS…LVCSVCTFFT (69 aa)) the chain is Lumenal. At S149 the chain carries Phosphoserine. Position 151 is a phosphoserine; by CAMK2B (S151). S153 carries the phosphoserine modification. The chain crosses the membrane as a helical span at residues 209 to 229 (ILGSYIPGVILSYLLLLCAFL). Residues 230 to 497 (CPLFKCNDIG…GFLSNLLGGH (268 aa)) are Cytoplasmic-facing. The segment covering 319–330 (FNLSEGYTPQTD) has biased composition (polar residues). 4 disordered regions span residues 319–365 (FNLS…EDEL), 377–396 (KEQL…AAGL), 436–455 (LSQA…GDDF), and 468–497 (SELG…LGGH). 2 stretches are compositionally biased toward basic and acidic residues: residues 334–348 (DLDR…RDLS) and 377–388 (KEQLDSGHRPSK). The segment covering 443–455 (PEEDTDTEEGDDF) has biased composition (acidic residues). The short motif at 453–458 (DDFELL) is the LIR motif element. Over residues 471–490 (GLTQDQEAEAQQNKKSSGFL) the composition is skewed to polar residues.

This sequence belongs to the RETREG family. As to quaternary structure, homooligomer; oligomerization is enhanced following endoplasmic reticulum stress and is mediated by the reticulon homology domain. Interacts with ATG8 family modifier proteins MAP1LC3A, MAP1LC3B, MAP1LC3C, GABARAP, GABARAPL1 and GABARAPL2. Shows higher affinity for GABARAPL1 than for MAP1LC3A or MAP1LC3B. Phosphorylation at Ser-151 by CAMK2B enhances oligomerization and membrane scission and reticulophagy activity. As to expression, overexpressed in esophageal squamous cell carcinoma.

It is found in the golgi apparatus. Its subcellular location is the cis-Golgi network membrane. It localises to the endoplasmic reticulum membrane. Functionally, endoplasmic reticulum (ER)-anchored autophagy regulator which mediates ER delivery into lysosomes through sequestration into autophagosomes. Promotes membrane remodeling and ER scission via its membrane bending capacity and targets the fragments into autophagosomes via interaction with ATG8 family proteins. Active under basal conditions. Required for collagen quality control in a LIR motif-dependent manner. Required for long-term survival of nociceptive and autonomic ganglion neurons. (Microbial infection) During SARS-CoV-2 infection, RETREG1-mediated reticulophagy is promoted by SARS-CoV-2 ORF3A protein. This induces endoplasmic reticulum stress and inflammatory responses and facilitates viral infection. The sequence is that of Reticulophagy regulator 1 from Homo sapiens (Human).